The following is a 305-amino-acid chain: Ornithine carbamoyltransferase (305 aa).

Residues 52-55, Gln-79, Arg-103, and 130-133 each bind carbamoyl phosphate; these read STRT and HPCQ. Residues Asn-161, Asp-221, and 225 to 226 each bind L-ornithine; that span reads SM. Carbamoyl phosphate is bound by residues 261 to 262 and Arg-289; that span reads CL.

This sequence belongs to the aspartate/ornithine carbamoyltransferase superfamily. OTCase family.

The protein resides in the cytoplasm. It carries out the reaction carbamoyl phosphate + L-ornithine = L-citrulline + phosphate + H(+). Its pathway is amino-acid biosynthesis; L-arginine biosynthesis; L-arginine from L-ornithine and carbamoyl phosphate: step 1/3. Its function is as follows. Reversibly catalyzes the transfer of the carbamoyl group from carbamoyl phosphate (CP) to the N(epsilon) atom of ornithine (ORN) to produce L-citrulline. The protein is Ornithine carbamoyltransferase of Methanocorpusculum labreanum (strain ATCC 43576 / DSM 4855 / Z).